We begin with the raw amino-acid sequence, 186 residues long: uncharacterized protein (186 aa).

4 helical membrane passes run leucine 5–isoleucine 25, isoleucine 39–alanine 59, asparagine 62–phenylalanine 82, and glycine 122–methionine 142.

The protein localises to the cell membrane. This is an uncharacterized protein from Borreliella burgdorferi (strain ATCC 35210 / DSM 4680 / CIP 102532 / B31) (Borrelia burgdorferi).